The primary structure comprises 81 residues: MMVIRHECPSYCIAQKRVALREFSELVLGTLSLLLEQKTNGKCSASLYDCSEEEKLFVKRLKLIKADIHAQLKACDCDISE.

This is an uncharacterized protein from Escherichia coli (strain K12).